Reading from the N-terminus, the 247-residue chain is Carboxy-S-adenosyl-L-methionine synthase (247 aa).

Residues Tyr-39, Asp-89–Asn-90, Asp-117–Ile-118, Asn-132, and Arg-199 each bind S-adenosyl-L-methionine.

Belongs to the class I-like SAM-binding methyltransferase superfamily. Cx-SAM synthase family. As to quaternary structure, homodimer.

The enzyme catalyses prephenate + S-adenosyl-L-methionine = carboxy-S-adenosyl-L-methionine + 3-phenylpyruvate + H2O. Its function is as follows. Catalyzes the conversion of S-adenosyl-L-methionine (SAM) to carboxy-S-adenosyl-L-methionine (Cx-SAM). The protein is Carboxy-S-adenosyl-L-methionine synthase of Sodalis glossinidius (strain morsitans).